Consider the following 429-residue polypeptide: Adenylosuccinate synthetase (429 aa).

GTP is bound by residues 12-18 (GDEGKGK) and 40-42 (GHT). D13 (proton acceptor) is an active-site residue. 2 residues coordinate Mg(2+): D13 and G40. IMP contacts are provided by residues 13-16 (DEGK), 38-41 (NAGH), T128, R142, Q223, T238, and R302. Catalysis depends on H41, which acts as the Proton donor. Residue 298–304 (TTTGRPR) coordinates substrate. Residues R304, 330-332 (SID), and 412-414 (SVG) each bind GTP.

Belongs to the adenylosuccinate synthetase family. In terms of assembly, homodimer. Mg(2+) is required as a cofactor.

It is found in the cytoplasm. The catalysed reaction is IMP + L-aspartate + GTP = N(6)-(1,2-dicarboxyethyl)-AMP + GDP + phosphate + 2 H(+). The protein operates within purine metabolism; AMP biosynthesis via de novo pathway; AMP from IMP: step 1/2. Functionally, plays an important role in the de novo pathway of purine nucleotide biosynthesis. Catalyzes the first committed step in the biosynthesis of AMP from IMP. The protein is Adenylosuccinate synthetase of Bacillus thuringiensis (strain Al Hakam).